A 1516-amino-acid polypeptide reads, in one-letter code: Neurite extension and migration factor (1516 aa).

Basic and acidic residues predominate over residues 380 to 405 (LDKKKGKEEGQEDKGVEKKDGKDNGE). Disordered regions lie at residues 380 to 440 (LDKK…GSFS), 589 to 610 (QKKKKQRNTNTDSIKTPFSQKQ), 1158 to 1225 (TFND…STKK), 1373 to 1419 (TPQE…PGYN), and 1437 to 1479 (LGNN…ESGT). 3 stretches are compositionally biased toward polar residues: residues 596-610 (NTNTDSIKTPFSQKQ), 1158-1170 (TFNDPSGQISTNN), and 1185-1194 (GAMNQSSSQK). A compositionally biased stretch (basic residues) spans 1443–1453 (THKKLYRHKSS). The span at 1456-1479 (ALRDEKCKGKHMEREQVHKDESGT) shows a compositional bias: basic and acidic residues.

As to expression, highly expressed in fetal and adult brain, predominantly in the cerebral cortex and the cerebellum. Also expressed in other tissues but to a lesser extent.

It is found in the nucleus. Its subcellular location is the cytoplasm. Functionally, involved in neurite outgrowth by regulating cell-cell adhesion via the N-cadherin signaling pathway. May act by regulating expression of protein-coding genes, such as N-cadherins and integrin beta-1 (ITGB1). The sequence is that of Neurite extension and migration factor from Homo sapiens (Human).